Here is a 367-residue protein sequence, read N- to C-terminus: F-box protein At3g56470 (367 aa).

Residues 1 to 18 (MVTRRRSKKKKKTKRKKQ) are compositionally biased toward basic residues. The interval 1–24 (MVTRRRSKKKKKTKRKKQSSKEKE) is disordered. An F-box domain is found at 26 to 81 (YQTFINLPCDLLQLVISRLPLKDNIRASAVCKTWHEACVSLRVIHTSPWLIYFSKT).

In Arabidopsis thaliana (Mouse-ear cress), this protein is F-box protein At3g56470.